Reading from the N-terminus, the 317-residue chain is Olfactory receptor 2F2 (317 aa).

At 1–25 (MEIDNQTWVREFILLGLSSDWCTQI) the chain is on the extracellular side. N5 is a glycosylation site (N-linked (GlcNAc...) asparagine). The helical transmembrane segment at 26 to 49 (SLFSLFLVTYLMTVLGNCLIVLLI) threads the bilayer. Residues 50–57 (RLDSRLHT) are Cytoplasmic-facing. A helical transmembrane segment spans residues 58–79 (PMYFFLTNLSLVDVSYATSVVP). Over 80-100 (QLLAHFLAEHKAIPFQSCAAQ) the chain is Extracellular. A disulfide bridge links C97 with C189. Residues 101-120 (LFFSLALGGIEFVLLAVMAY) form a helical membrane-spanning segment. Topologically, residues 121 to 139 (DRHVAVSDRLRYSAIMHGG) are cytoplasmic. The chain crosses the membrane as a helical span at residues 140 to 158 (LCARLAITSWVSGSINSLV). The Extracellular segment spans residues 159-195 (QTAITFQLPMCTNKFIDHISCELLAVVRLACVDTSSN). A helical transmembrane segment spans residues 196–219 (EAAIMVSSIVLLMTPFCLVLLSYI). Over 220–236 (RIISTILKIQSREGRKK) the chain is Cytoplasmic. The helical transmembrane segment at 237–259 (AFHTCASHLTVVALCYGTTIFTY) threads the bilayer. At 260–272 (IQPHSGPSVLQEK) the chain is on the extracellular side. A helical transmembrane segment spans residues 273 to 292 (LISVFYAIVMPLLNPVIYSL). Over 293–317 (RNKEVKGAWHKLLEKFSGLTSKLGT) the chain is Cytoplasmic.

It belongs to the G-protein coupled receptor 1 family.

Its subcellular location is the cell membrane. Odorant receptor. This is Olfactory receptor 2F2 (OR2F2) from Homo sapiens (Human).